A 94-amino-acid chain; its full sequence is Aspartyl/glutamyl-tRNA(Asn/Gln) amidotransferase subunit C (94 aa).

It belongs to the GatC family. In terms of assembly, heterotrimer of A, B and C subunits.

The enzyme catalyses L-glutamyl-tRNA(Gln) + L-glutamine + ATP + H2O = L-glutaminyl-tRNA(Gln) + L-glutamate + ADP + phosphate + H(+). It carries out the reaction L-aspartyl-tRNA(Asn) + L-glutamine + ATP + H2O = L-asparaginyl-tRNA(Asn) + L-glutamate + ADP + phosphate + 2 H(+). Allows the formation of correctly charged Asn-tRNA(Asn) or Gln-tRNA(Gln) through the transamidation of misacylated Asp-tRNA(Asn) or Glu-tRNA(Gln) in organisms which lack either or both of asparaginyl-tRNA or glutaminyl-tRNA synthetases. The reaction takes place in the presence of glutamine and ATP through an activated phospho-Asp-tRNA(Asn) or phospho-Glu-tRNA(Gln). The protein is Aspartyl/glutamyl-tRNA(Asn/Gln) amidotransferase subunit C of Caldicellulosiruptor bescii (strain ATCC BAA-1888 / DSM 6725 / KCTC 15123 / Z-1320) (Anaerocellum thermophilum).